The primary structure comprises 584 residues: Leucine-rich repeat and fibronectin type III domain-containing protein 1 (584 aa).

Positions 1 to 17 are cleaved as a signal peptide; the sequence is MERLVFCVLVFGALAKA. In terms of domain architecture, LRRNT spans 18–51; it reads QLCPGRCICQTISPTLTLLCAKTGLLFVPPTVDR. Topologically, residues 18–494 are extracellular; it reads QLCPGRCICQ…VPSQFLGGTM (477 aa). LRR repeat units lie at residues 52–73, 76–97, 100–121, 124–145, 149–170, 173–194, and 197–218; these read KTVE…DFLN, SLVH…AFMG, SLRA…QLKG, NLRH…SFDE, TIED…AIAR, NINT…TFTL, and KLVR…TLFQ. Residue Asn-73 is glycosylated (N-linked (GlcNAc...) asparagine). Residues 241–287 enclose the LRRCT domain; sequence NPLHCNCELLWLRRLTREDDLETCASPEHLMDKYFWSIQEEEFICEP. In terms of domain architecture, Ig-like spans 288–375; it reads PLITKHQVTK…GIATAAVHVH (88 aa). Cys-310 and Cys-359 are disulfide-bonded. N-linked (GlcNAc...) asparagine glycosylation is found at Asn-332, Asn-341, Asn-384, Asn-408, and Asn-421. The tract at residues 393–414 is disordered; sequence DPGLSDISTSSRSSSNDSKTHS. Over residues 397-409 the composition is skewed to low complexity; that stretch reads SDISTSSRSSSND. The helical transmembrane segment at 495–515 threads the bilayer; the sequence is IIIIGGIIVASVLVFIIILMI. Residues 516–584 are Cytoplasmic-facing; the sequence is RYKAYSGGGG…MVLPILHLLF (69 aa). The segment at 539–564 is disordered; sequence HVHSQTNGSRSAATKQSEEPPESPAG. A compositionally biased stretch (polar residues) spans 540-553; that stretch reads VHSQTNGSRSAATK.

The protein belongs to the LRFN family.

The protein resides in the membrane. The protein localises to the synapse. Involved in the regulation of excitatory synapses. This chain is Leucine-rich repeat and fibronectin type III domain-containing protein 1 (lrfn1), found in Danio rerio (Zebrafish).